A 227-amino-acid polypeptide reads, in one-letter code: Octanoyltransferase (227 aa).

Positions 43 to 218 (ADSQDELWIV…TFTKTLGYQE (176 aa)) constitute a BPL/LPL catalytic domain. Substrate is bound by residues 82–89 (RGGQVTYH), 149–151 (SLG), and 162–164 (GLA). The active-site Acyl-thioester intermediate is the Cys180.

The protein belongs to the LipB family.

It localises to the cytoplasm. The enzyme catalyses octanoyl-[ACP] + L-lysyl-[protein] = N(6)-octanoyl-L-lysyl-[protein] + holo-[ACP] + H(+). It functions in the pathway protein modification; protein lipoylation via endogenous pathway; protein N(6)-(lipoyl)lysine from octanoyl-[acyl-carrier-protein]: step 1/2. Its function is as follows. Catalyzes the transfer of endogenously produced octanoic acid from octanoyl-acyl-carrier-protein onto the lipoyl domains of lipoate-dependent enzymes. Lipoyl-ACP can also act as a substrate although octanoyl-ACP is likely to be the physiological substrate. The protein is Octanoyltransferase of Shewanella denitrificans (strain OS217 / ATCC BAA-1090 / DSM 15013).